Reading from the N-terminus, the 127-residue chain is Prophage antitermination protein Q homolog QuuD (127 aa).

This sequence belongs to the phage antitermination Q type 1 family.

Functionally, positively regulate expression of some phage genes. Bacterial host RNA polymerase modified by antitermination proteins transcribes through termination sites that otherwise prevent expression of the regulated genes. The chain is Prophage antitermination protein Q homolog QuuD (quuD) from Escherichia coli (strain K12).